The primary structure comprises 450 residues: MFGRESADLAKKYFESLRKKAADKRFARYEGSAASETPSATGPLLRGGHEELNRGCANAARDGFELAAQPEPRRVTGFQFAVDVSQRFQACIPPVGSLHSCCAASCMFAFAASEALYETLVADSLEAARLKVGAEYKNLANDSGASDGEMAPPRPDSMLGGLRGALDELAFAQYSNADAEAHERVYDGVMAGYSDMICSDEFAQLSDFVFRFAALLKTSFKGTTGAGRGAYYVSPGSNKRRRLNRGNSSRNGYRPREGRLELFQKMILMHATYFAACITLDDESTERMDRYLAEVFNTPLFSSPALHHFKQRTSVFLVPRRHGKTWFLVPLISLLVSCFEGLRIGYTAHLRKATKPVFEEIYARLCRWYGEDRVHQIKGETIAFSFKNGARSSIVFASSQNTNVSIRQLLYGVAAKARCGIDDANGRVSELAFYFCSHGAPLNFLLLSAP.

This sequence belongs to the herpesviridae large terminase family.

The polypeptide is Large terminase protein homolog UL15b (UL15b) (Psittacid herpesvirus 1 (isolate Amazon parrot/-/97-0001/1997) (PsHV-1)).